We begin with the raw amino-acid sequence, 64 residues long: Translational regulator CsrA (64 aa).

The protein belongs to the CsrA/RsmA family. In terms of assembly, homodimer; the beta-strands of each monomer intercalate to form a hydrophobic core, while the alpha-helices form wings that extend away from the core.

It localises to the cytoplasm. Its function is as follows. A key translational regulator that binds mRNA to regulate translation initiation and/or mRNA stability. Mediates global changes in gene expression, shifting from rapid growth to stress survival by linking envelope stress, the stringent response and the catabolite repression systems. Usually binds in the 5'-UTR; binding at or near the Shine-Dalgarno sequence prevents ribosome-binding, repressing translation, binding elsewhere in the 5'-UTR can activate translation and/or stabilize the mRNA. Its function is antagonized by small RNA(s). In Actinobacillus pleuropneumoniae serotype 5b (strain L20), this protein is Translational regulator CsrA.